The following is a 612-amino-acid chain: Dihydroxy-acid dehydratase (612 aa).

Asp-81 provides a ligand contact to Mg(2+). Cys-122 provides a ligand contact to [2Fe-2S] cluster. Positions 123 and 124 each coordinate Mg(2+). N6-carboxylysine is present on Lys-124. Residue Cys-196 participates in [2Fe-2S] cluster binding. Glu-492 provides a ligand contact to Mg(2+). Ser-518 functions as the Proton acceptor in the catalytic mechanism.

Belongs to the IlvD/Edd family. In terms of assembly, homodimer. [2Fe-2S] cluster is required as a cofactor. Mg(2+) serves as cofactor.

The catalysed reaction is (2R)-2,3-dihydroxy-3-methylbutanoate = 3-methyl-2-oxobutanoate + H2O. It catalyses the reaction (2R,3R)-2,3-dihydroxy-3-methylpentanoate = (S)-3-methyl-2-oxopentanoate + H2O. It participates in amino-acid biosynthesis; L-isoleucine biosynthesis; L-isoleucine from 2-oxobutanoate: step 3/4. It functions in the pathway amino-acid biosynthesis; L-valine biosynthesis; L-valine from pyruvate: step 3/4. In terms of biological role, functions in the biosynthesis of branched-chain amino acids. Catalyzes the dehydration of (2R,3R)-2,3-dihydroxy-3-methylpentanoate (2,3-dihydroxy-3-methylvalerate) into 2-oxo-3-methylpentanoate (2-oxo-3-methylvalerate) and of (2R)-2,3-dihydroxy-3-methylbutanoate (2,3-dihydroxyisovalerate) into 2-oxo-3-methylbutanoate (2-oxoisovalerate), the penultimate precursor to L-isoleucine and L-valine, respectively. This Paracoccus denitrificans (strain Pd 1222) protein is Dihydroxy-acid dehydratase.